A 503-amino-acid chain; its full sequence is Maturase K (503 aa).

Belongs to the intron maturase 2 family. MatK subfamily.

The protein localises to the plastid. The protein resides in the chloroplast. In terms of biological role, usually encoded in the trnK tRNA gene intron. Probably assists in splicing its own and other chloroplast group II introns. This Rosa foetida (Austrian briar) protein is Maturase K.